A 323-amino-acid chain; its full sequence is 1D-myo-inositol 2-acetamido-2-deoxy-alpha-D-glucopyranoside deacetylase 1 (323 aa).

Zn(2+)-binding residues include His30, Asp33, and His165.

It belongs to the MshB deacetylase family. It depends on Zn(2+) as a cofactor.

The enzyme catalyses 1D-myo-inositol 2-acetamido-2-deoxy-alpha-D-glucopyranoside + H2O = 1D-myo-inositol 2-amino-2-deoxy-alpha-D-glucopyranoside + acetate. Functionally, catalyzes the deacetylation of 1D-myo-inositol 2-acetamido-2-deoxy-alpha-D-glucopyranoside (GlcNAc-Ins) in the mycothiol biosynthesis pathway. The protein is 1D-myo-inositol 2-acetamido-2-deoxy-alpha-D-glucopyranoside deacetylase 1 of Catenulispora acidiphila (strain DSM 44928 / JCM 14897 / NBRC 102108 / NRRL B-24433 / ID139908).